The sequence spans 68 residues: Large ribosomal subunit protein bL35 (68 aa).

This sequence belongs to the bacterial ribosomal protein bL35 family.

The chain is Large ribosomal subunit protein bL35 from Orientia tsutsugamushi (strain Boryong) (Rickettsia tsutsugamushi).